Reading from the N-terminus, the 255-residue chain is PHD finger protein ALFIN-LIKE 4 (255 aa).

Residue Met1 is modified to N-acetylmethionine. A disordered region spans residues 145 to 200; sequence GKDKSSVSNNSSNRSKSSSKRGSESRAKFSKPEPKDDEEEEEEGVEEEDEDEQGET. Positions 150-160 are enriched in low complexity; that stretch reads SVSNNSSNRSK. The segment covering 165 to 178 has biased composition (basic and acidic residues); that stretch reads RGSESRAKFSKPEP. Residues 179–198 are compositionally biased toward acidic residues; that stretch reads KDDEEEEEEGVEEEDEDEQG. The PHD-type zinc-finger motif lies at 199–251; that stretch reads ETQCGACGESYAADEFWICCDLCEMWFHGKCVKITPARAEHIKQYKCPSCSNK.

It belongs to the Alfin family. As to quaternary structure, interacts with H3K4me3 and to a lesser extent with H3K4me2. Ubiquitously expressed.

Its subcellular location is the nucleus. In terms of biological role, histone-binding component that specifically recognizes H3 tails trimethylated on 'Lys-4' (H3K4me3), which mark transcription start sites of virtually all active genes. The polypeptide is PHD finger protein ALFIN-LIKE 4 (AL4) (Arabidopsis thaliana (Mouse-ear cress)).